A 78-amino-acid chain; its full sequence is Putative defensin-like protein 202 (78 aa).

The signal sequence occupies residues 1-29 (MAKTQNFVCFTAVLLILILVSTEIPMIEG). 3 disulfide bridges follow: Cys-44–Cys-65, Cys-49–Cys-74, and Cys-53–Cys-76.

It belongs to the DEFL family.

Its subcellular location is the secreted. This is Putative defensin-like protein 202 from Arabidopsis thaliana (Mouse-ear cress).